We begin with the raw amino-acid sequence, 154 residues long: SsrA-binding protein (154 aa).

The disordered stretch occupies residues 134–154 (DKREDIKKRDQERELSRRFKN).

The protein belongs to the SmpB family.

The protein localises to the cytoplasm. Required for rescue of stalled ribosomes mediated by trans-translation. Binds to transfer-messenger RNA (tmRNA), required for stable association of tmRNA with ribosomes. tmRNA and SmpB together mimic tRNA shape, replacing the anticodon stem-loop with SmpB. tmRNA is encoded by the ssrA gene; the 2 termini fold to resemble tRNA(Ala) and it encodes a 'tag peptide', a short internal open reading frame. During trans-translation Ala-aminoacylated tmRNA acts like a tRNA, entering the A-site of stalled ribosomes, displacing the stalled mRNA. The ribosome then switches to translate the ORF on the tmRNA; the nascent peptide is terminated with the 'tag peptide' encoded by the tmRNA and targeted for degradation. The ribosome is freed to recommence translation, which seems to be the essential function of trans-translation. The sequence is that of SsrA-binding protein from Leuconostoc mesenteroides subsp. mesenteroides (strain ATCC 8293 / DSM 20343 / BCRC 11652 / CCM 1803 / JCM 6124 / NCDO 523 / NBRC 100496 / NCIMB 8023 / NCTC 12954 / NRRL B-1118 / 37Y).